The following is a 342-amino-acid chain: Deoxyguanosinetriphosphate triphosphohydrolase-like protein (342 aa).

The HD domain maps to 75–190 (RLVHTLEVSQ…VRFADKIAYV (116 aa)).

This sequence belongs to the dGTPase family. Type 2 subfamily.

In Clostridium perfringens (strain SM101 / Type A), this protein is Deoxyguanosinetriphosphate triphosphohydrolase-like protein.